The sequence spans 348 residues: Protein lifeguard 1 (348 aa).

Residues 1-118 (MSHEKSFLVS…GNYQEEGPPS (118 aa)) form a disordered region. Residues 14–41 (YPPPNPGYPVGPQAPMPPYVQPPYPGAP) are compositionally biased toward pro residues. The span at 42–57 (YPQAAFQPSPYGQPGY) shows a compositional bias: low complexity. Pro residues predominate over residues 82-101 (GPYPQSPFPPNPYGQPPPFQ). Helical transmembrane passes span 142–162 (VFLVLTLQLSVTLSTVAIFTF), 174–194 (VWTYYVSYAIFFISLIVLSCC), 205–225 (LVALSILTISLSYMVGMIASF), 230–250 (AVIMAVGITTAVCFTVVIFSM), 260–280 (MGVLLVSVVVLFIFAILCIFI), 284–304 (ILEIVYASLGALLFTCFLAVD), and 323–343 (FAALNLYTDIINIFLYILTII).

The protein belongs to the BI1 family. LFG subfamily.

The protein localises to the membrane. Functionally, potential apoptotic regulator. The chain is Protein lifeguard 1 (Grina) from Rattus norvegicus (Rat).